The sequence spans 376 residues: uncharacterized protein (376 aa).

The signal sequence occupies residues 1 to 28 (MCKPRVWRIAHTIVHVGALLLGTSQLTT). Cysteine 29 carries the N-palmitoyl cysteine lipid modification. The S-diacylglycerol cysteine moiety is linked to residue cysteine 29.

It belongs to the TP013X lipoprotein family.

It localises to the cell membrane. This is an uncharacterized protein from Treponema pallidum (strain Nichols).